A 69-amino-acid chain; its full sequence is ATP synthase protein 8 (69 aa).

A helical membrane pass occupies residues 8–24 (TWTLTISLMIISLFCIY). The residue at position 55 (lysine 55) is an N6-acetyllysine; alternate. Lysine 55 bears the N6-succinyllysine; alternate mark. Lysine 58 is subject to N6-acetyllysine.

Belongs to the ATPase protein 8 family. F-type ATPases have 2 components, CF(1) - the catalytic core - and CF(0) - the membrane proton channel. Component of an ATP synthase complex composed of ATP5PB, ATP5MC1, ATP5F1E, ATP5PD, ATP5ME, ATP5PF, ATP5MF, MT-ATP6, MT-ATP8, ATP5F1A, ATP5F1B, ATP5F1D, ATP5F1C, ATP5PO, ATP5MG, ATP5MK and ATP5MJ. Interacts with PRICKLE3.

The protein localises to the mitochondrion membrane. Its function is as follows. Mitochondrial membrane ATP synthase (F(1)F(0) ATP synthase or Complex V) produces ATP from ADP in the presence of a proton gradient across the membrane which is generated by electron transport complexes of the respiratory chain. F-type ATPases consist of two structural domains, F(1) - containing the extramembraneous catalytic core and F(0) - containing the membrane proton channel, linked together by a central stalk and a peripheral stalk. During catalysis, ATP synthesis in the catalytic domain of F(1) is coupled via a rotary mechanism of the central stalk subunits to proton translocation. Part of the complex F(0) domain. Minor subunit located with subunit a in the membrane. This is ATP synthase protein 8 (MT-ATP8) from Didelphis virginiana (North American opossum).